The following is a 120-amino-acid chain: MPDRSHLQSGKDAERQALEHLQHQGLRLLAQNWLCKRGELDLVMLDGDTVVFVEVRYRKNTQWGGALDSIDGRKRQKLIFAAQYFLQRESRWANSPCRFDVVAIDSHQDQLNWLQNAFDS.

This sequence belongs to the UPF0102 family.

This Pseudomonas fluorescens (strain Pf0-1) protein is UPF0102 protein Pfl01_4685.